The chain runs to 271 residues: MQAACWYVLLLLQPTVYLVTCANLTNGGKSELLKSGGSKSTLKHIWTESSKDLSISRLLSQTFRGKENDTDLDLRYDTPEPYSEQDLWDWLRNSTDLQEPRPRAKRRPIVKTGKFKKMFGWGDFHSNIKTVKLNLLITGKIVDHGNGTFSVYFRHNSTGQGNVSVSLVPPTKIVEFDLAQQTVIDAKDSKSFNCRIEYEKVDKATKNTLCNYDPSKTCYQEQTQSHVSWLCSKPFKVICIYISFYSTDYKLVQKVCPDYNYHSDTPYFPSG.

The signal sequence occupies residues 1–21; sequence MQAACWYVLLLLQPTVYLVTC. The II stretch occupies residues 22 to 97; sequence ANLTNGGKSE…WDWLRNSTDL (76 aa). N-linked (GlcNAc...) asparagine glycans are attached at residues Asn23, Asn68, Asn93, Asn146, Asn156, and Asn162. An III region spans residues 98-176; that stretch reads QEPRPRAKRR…LVPPTKIVEF (79 aa). Residues 177-185 form an IV (linker domain) region; it reads DLAQQTVID. The v (Cys-rich) stretch occupies residues 186–271; it reads AKDSKSFNCR…HSDTPYFPSG (86 aa).

Belongs to the neurexophilin family. In terms of processing, may be proteolytically processed at the boundary between the N-terminal non-conserved and the central conserved domain in neuron-like cells.

It is found in the secreted. Functionally, may be signaling molecules that resemble neuropeptides. Ligand for alpha-neurexins. The protein is Neurexophilin-1 (NXPH1) of Bos taurus (Bovine).